The primary structure comprises 63 residues: MDPQDCTCAAGDSCSCAGSCKCKNCRCRSCRKSCCSCCPAGCNNCAKGCVCKEPASSKCSCCH.

A beta region spans residues 1-30; it reads MDPQDCTCAAGDSCSCAGSCKCKNCRCRSC. The a divalent metal cation site is built by Cys-6, Cys-8, Cys-14, Cys-16, Cys-20, Cys-22, Cys-25, Cys-27, Cys-30, Cys-34, Cys-35, Cys-37, Cys-38, Cys-42, Cys-45, Cys-49, Cys-51, Cys-59, Cys-61, and Cys-62. Residues 31-63 form an alpha region; the sequence is RKSCCSCCPAGCNNCAKGCVCKEPASSKCSCCH.

Belongs to the metallothionein superfamily. Type 1 family.

In terms of biological role, metallothioneins have a high content of cysteine residues that bind various heavy metals. The chain is Metallothionein from Anas platyrhynchos (Mallard).